A 240-amino-acid chain; its full sequence is PF03932 family protein CutC (240 aa).

The protein belongs to the CutC family.

It is found in the cytoplasm. In Xanthomonas campestris pv. campestris (strain 8004), this protein is PF03932 family protein CutC.